The primary structure comprises 77 residues: Large ribosomal subunit protein uL29 (77 aa).

Belongs to the universal ribosomal protein uL29 family.

The polypeptide is Large ribosomal subunit protein uL29 (Mycolicibacterium gilvum (strain PYR-GCK) (Mycobacterium gilvum (strain PYR-GCK))).